The chain runs to 101 residues: MAGQKIRIRLKAYDHEAIDASARKIVETVVRTGANVVGPVPLPTEKNVYCVIRSPHKYKDSREHFEMRTHKRLIDILDPTPKTVDALMRIDLPASVDVNIQ.

Belongs to the universal ribosomal protein uS10 family. Part of the 30S ribosomal subunit.

Its function is as follows. Involved in the binding of tRNA to the ribosomes. The protein is Small ribosomal subunit protein uS10 of Mycobacterium leprae (strain Br4923).